The chain runs to 511 residues: MVLPRLYTATSRAAFKAAKQSAPLLSTSWKRCMASAAQSTPITGKVTAVIGAIVDVHFEQSELPAILNALEIKTPQGKLVLEVAQHLGENTVRTIAMDGTEGLVRGEKVLDTGGPISVPVGRETLGRIINVIGEPIDERGPIKSKLRKPIHADPPSFAEQSTSAEILETGIKVVDLLAPYARGGKIGLFGGAGVGKTVFIQELINNIAKAHGGFSVFTGVGERTREGNDLYREMKETGVINLEGESKVALVFGQMNEPPGARARVALTGLTIAEYFRDEEGQDVLLFIDNIFRFTQAGSEVSALLGRIPSAVGYQPTLATDMGLLQERITTTKKGSVTSVQAVYVPADDLTDPAPATTFAHLDATTVLSRGISELGIYPAVDPLDSKSRLLDAAVVGQEHYDVASKVQETLQTYKSLQDIIAILGMDELSEQDKLTVERARKIQRFLSQPFAVAEVFTGIPGKLVRLKDTVASFKAVLEGKYDNIPEHAFYMVGGIEDVVAKAEKLAAEAN.

The N-terminal 33 residues, M1 to M33, are a transit peptide targeting the mitochondrion. T112 is modified (phosphothreonine). Residue G190 to T197 participates in ATP binding. T237 carries the phosphothreonine modification. S373 carries the post-translational modification Phosphoserine.

This sequence belongs to the ATPase alpha/beta chains family. F-type ATPases have 2 components, CF(1) - the catalytic core - and CF(0) - the membrane proton channel. CF(1) has five subunits: alpha(3), beta(3), gamma(1), delta(1), epsilon(1). CF(0) has three main subunits: a, b and c.

Its subcellular location is the mitochondrion. The protein localises to the mitochondrion inner membrane. The enzyme catalyses ATP + H2O + 4 H(+)(in) = ADP + phosphate + 5 H(+)(out). Its function is as follows. Mitochondrial membrane ATP synthase (F(1)F(0) ATP synthase or Complex V) produces ATP from ADP in the presence of a proton gradient across the membrane which is generated by electron transport complexes of the respiratory chain. F-type ATPases consist of two structural domains, F(1) - containing the extramembraneous catalytic core, and F(0) - containing the membrane proton channel, linked together by a central stalk and a peripheral stalk. During catalysis, ATP synthesis in the catalytic domain of F(1) is coupled via a rotary mechanism of the central stalk subunits to proton translocation. Subunits alpha and beta form the catalytic core in F(1). Rotation of the central stalk against the surrounding alpha(3)beta(3) subunits leads to hydrolysis of ATP in three separate catalytic sites on the beta subunits. The protein is ATP synthase subunit beta, mitochondrial (ATP2) of Saccharomyces cerevisiae (strain ATCC 204508 / S288c) (Baker's yeast).